The following is a 282-amino-acid chain: Bifunctional protein FolD (282 aa).

Residues 164 to 166 (GRS) and Ser-189 each bind NADP(+).

This sequence belongs to the tetrahydrofolate dehydrogenase/cyclohydrolase family. As to quaternary structure, homodimer.

The enzyme catalyses (6R)-5,10-methylene-5,6,7,8-tetrahydrofolate + NADP(+) = (6R)-5,10-methenyltetrahydrofolate + NADPH. It carries out the reaction (6R)-5,10-methenyltetrahydrofolate + H2O = (6R)-10-formyltetrahydrofolate + H(+). It participates in one-carbon metabolism; tetrahydrofolate interconversion. Catalyzes the oxidation of 5,10-methylenetetrahydrofolate to 5,10-methenyltetrahydrofolate and then the hydrolysis of 5,10-methenyltetrahydrofolate to 10-formyltetrahydrofolate. In Streptococcus suis (strain 05ZYH33), this protein is Bifunctional protein FolD.